The primary structure comprises 103 residues: MRLKKNDNVLVIAGKDKGKTGKVRYAYPRTDRVLVEGVNMIKRHSRAKGQAKQAGIIEREAPLHVSNLMLLCSKCNKPARIGSRELADGKSVRYCKSCNEVID.

The protein belongs to the universal ribosomal protein uL24 family. As to quaternary structure, part of the 50S ribosomal subunit.

One of two assembly initiator proteins, it binds directly to the 5'-end of the 23S rRNA, where it nucleates assembly of the 50S subunit. In terms of biological role, one of the proteins that surrounds the polypeptide exit tunnel on the outside of the subunit. The polypeptide is Large ribosomal subunit protein uL24 (Dehalococcoides mccartyi (strain ATCC BAA-2100 / JCM 16839 / KCTC 5957 / BAV1)).